We begin with the raw amino-acid sequence, 433 residues long: T-box transcription factor T (433 aa).

Residues 49-217 (LWLRFKELTN…YNPFAKAFLD (169 aa)) constitute a DNA-binding region (T-box).

As to quaternary structure, monomer. Binds DNA as a monomer.

The protein localises to the nucleus. Involved in the transcriptional regulation of genes required for mesoderm formation and differentiation. Binds to a palindromic site (called T site) and activates gene transcription when bound to such a site. The chain is T-box transcription factor T from Gallus gallus (Chicken).